Reading from the N-terminus, the 225-residue chain is Cytidylate kinase (225 aa).

Position 10–18 (10–18 (GPASSGKST)) interacts with ATP.

The protein belongs to the cytidylate kinase family. Type 1 subfamily.

The protein resides in the cytoplasm. It carries out the reaction CMP + ATP = CDP + ADP. It catalyses the reaction dCMP + ATP = dCDP + ADP. The polypeptide is Cytidylate kinase (Streptococcus gordonii (strain Challis / ATCC 35105 / BCRC 15272 / CH1 / DL1 / V288)).